Consider the following 237-residue polypeptide: 7-cyano-7-deazaguanine synthase (237 aa).

9-19 (YSGGLDSTTCL) is a binding site for ATP. Positions 189, 199, 202, and 205 each coordinate Zn(2+).

It belongs to the QueC family. Zn(2+) serves as cofactor.

It carries out the reaction 7-carboxy-7-deazaguanine + NH4(+) + ATP = 7-cyano-7-deazaguanine + ADP + phosphate + H2O + H(+). The protein operates within purine metabolism; 7-cyano-7-deazaguanine biosynthesis. Functionally, catalyzes the ATP-dependent conversion of 7-carboxy-7-deazaguanine (CDG) to 7-cyano-7-deazaguanine (preQ(0)). The chain is 7-cyano-7-deazaguanine synthase from Geobacter metallireducens (strain ATCC 53774 / DSM 7210 / GS-15).